We begin with the raw amino-acid sequence, 398 residues long: Ethanolaminephosphotransferase 1 (398 aa).

Ala-2 carries the post-translational modification N-acetylalanine. Helical transmembrane passes span 47 to 69 (WLAPNLITFSGFMLLVFNFLLLT), 84 to 103 (HVPDWVWIVVGILNFAAYTL), 123 to 145 (LFDHGLDSWSCVYFVVTVYSIFG), 150 to 172 (GVSVFVLYLLLWVVLFSFILSHW), 179 to 201 (VLFLPWGYDISQVTISFVYIVTA), 221 to 243 (LFTAMIIGCALCVTLPMSLLNFF), 256 to 278 (VYEAMVPFFSPCLLFTLCTVWIL), 291 to 310 (IFYFMVGTAFANITCQLIVC), 319 to 341 (TLNWLLLPLLLVVAAVIVGAATS), and 345 to 367 (SALLYTLTAAFTLAHIHYGVQVV). A non-standard amino acid (selenocysteine) is located at residue Sec-388.

Belongs to the CDP-alcohol phosphatidyltransferase class-I family. The cofactor is Mg(2+). Requires Mn(2+) as cofactor.

It is found in the endoplasmic reticulum membrane. It catalyses the reaction CDP-ethanolamine + a 1,2-diacyl-sn-glycerol = a 1,2-diacyl-sn-glycero-3-phosphoethanolamine + CMP + H(+). The catalysed reaction is 1-O-alkyl-2-acyl-sn-glycerol + CDP-ethanolamine = a 1-O-alkyl-2-acyl-sn-glycero-3-phosphoethanolamine + CMP + H(+). It participates in phospholipid metabolism; phosphatidylethanolamine biosynthesis; phosphatidylethanolamine from ethanolamine: step 3/3. Its function is as follows. Ethanolaminephosphotransferase that catalyzes the transfer of phosphoethanolamine (PE) from CDP-ethanolamine to lipid acceptors, the final step in the synthesis of PE via the 'Kennedy' pathway. PE is the second most abundant phospholipid of membranes in mammals and is involved in various membrane-related cellular processes. The enzyme is critical for the synthesis of several PE species and also catalyzes the synthesis of plasmanyl-PE, a lipid required for proper myelination and neurodevelopment, from 1-alkyl-2-acylglycerol. This chain is Ethanolaminephosphotransferase 1, found in Mus musculus (Mouse).